Here is a 369-residue protein sequence, read N- to C-terminus: Anhydro-N-acetylmuramic acid kinase (369 aa).

An ATP-binding site is contributed by 12 to 19 (GTSLDGVD).

It belongs to the anhydro-N-acetylmuramic acid kinase family.

It carries out the reaction 1,6-anhydro-N-acetyl-beta-muramate + ATP + H2O = N-acetyl-D-muramate 6-phosphate + ADP + H(+). It functions in the pathway amino-sugar metabolism; 1,6-anhydro-N-acetylmuramate degradation. Its pathway is cell wall biogenesis; peptidoglycan recycling. Catalyzes the specific phosphorylation of 1,6-anhydro-N-acetylmuramic acid (anhMurNAc) with the simultaneous cleavage of the 1,6-anhydro ring, generating MurNAc-6-P. Is required for the utilization of anhMurNAc either imported from the medium or derived from its own cell wall murein, and thus plays a role in cell wall recycling. The protein is Anhydro-N-acetylmuramic acid kinase of Escherichia coli O81 (strain ED1a).